Reading from the N-terminus, the 166-residue chain is Pyruvoyl-dependent arginine decarboxylase (166 aa).

Ser45 bears the Pyruvic acid (Ser) mark.

The protein belongs to the PdaD family. It depends on pyruvate as a cofactor.

The catalysed reaction is L-arginine + H(+) = agmatine + CO2. In Methanocella arvoryzae (strain DSM 22066 / NBRC 105507 / MRE50), this protein is Pyruvoyl-dependent arginine decarboxylase.